A 593-amino-acid polypeptide reads, in one-letter code: Metal-response element-binding transcription factor 2 (593 aa).

Positions 1-35 (MRDSTGAGNSLVHKRSPLRRNQKTPTSLTKLSLQD) are disordered. Over residues 12 to 22 (VHKRSPLRRNQ) the composition is skewed to basic residues. The span at 23 to 32 (KTPTSLTKLS) shows a compositional bias: polar residues. T24 carries the post-translational modification Phosphothreonine. A Tudor domain is found at 44–101 (CKFEEGQDVLARWSDGLFYLGTIKKINILKQSCFIIFEDSSKSWVLWKDIQTGATGSG). PHD-type zinc fingers lie at residues 102 to 157 (EMVC…CVFA) and 201 to 255 (QCYC…CSSG). A Glycyl lysine isopeptide (Lys-Gly) (interchain with G-Cter in SUMO2) cross-link involves residue K360. The span at 360–374 (KAEKEPEGTSHEFKI) shows a compositional bias: basic and acidic residues. 2 disordered regions span residues 360 to 411 (KAEK…PYTR) and 424 to 486 (KESI…TRTG). Residues 445–454 (TAHSSNTSDV) are compositionally biased toward polar residues. A Phosphoserine modification is found at S452. Residues 459–471 (ASSAKETTSSSIS) show a composition bias toward low complexity. A Glycyl lysine isopeptide (Lys-Gly) (interchain with G-Cter in SUMO2) cross-link involves residue K522.

It belongs to the Polycomblike family. In terms of assembly, associates with the PRC2 complex, which consists of the core components EED, EZH1 or EZH2, SUZ12, and RBBP4, and various combinations of accessory subunits including AEBP2, JARID2, PHF19, MTF2 and EPOP. Forms a dimeric PRC2.1 (class 1, PRC-PCL) complex consisting of at least SUZ12, RBBP4, and PHF19 or MTF2; PHF19 and MTF2 stabilize the dimeric structure which enhances PRC2 interaction with chromatin.

It is found in the nucleus. In terms of biological role, polycomb group (PcG) protein that specifically binds histone H3 trimethylated at 'Lys-36' (H3K36me3) and recruits the PRC2 complex, thus enhancing PRC2 H3K27me3 methylation activity. Regulates the transcriptional networks during embryonic stem cell self-renewal and differentiation. Promotes recruitment of the PRC2 complex to the inactive X chromosome in differentiating XX ES cells and PRC2 recruitment to target genes in undifferentiated ES cells. Required to repress Hox genes by enhancing H3K27me3 methylation of the PRC2 complex. In some conditions may act as an inhibitor of PRC2 activity: able to activate the CDKN2A gene and promote cellular senescence by suppressing the catalytic activity of the PRC2 complex locally. Binds to the metal-regulating-element (MRE) of MT1A gene promoter. This is Metal-response element-binding transcription factor 2 (MTF2) from Homo sapiens (Human).